The primary structure comprises 547 residues: CTP synthase (547 aa).

An amidoligase domain region spans residues 1–265; that stretch reads MARYVFITGG…DQAVLDAFGI (265 aa). A CTP-binding site is contributed by Ser13. UTP is bound at residue Ser13. Residues 14–19 and Asp71 contribute to the ATP site; that span reads SLGKGL. Mg(2+)-binding residues include Asp71 and Glu139. CTP-binding positions include 146-148, 186-191, and Lys222; these read DIE and KTKPTQ. Residues 186–191 and Lys222 each bind UTP; that span reads KTKPTQ. The region spanning 291–546 is the Glutamine amidotransferase type-1 domain; the sequence is RVAIVGKYTQ…VRAAVEVSRL (256 aa). Residue Gly353 participates in L-glutamine binding. The active-site Nucleophile; for glutamine hydrolysis is the Cys380. L-glutamine contacts are provided by residues 381-384, Glu404, and Arg474; that span reads LGMQ. Active-site residues include His519 and Glu521.

It belongs to the CTP synthase family. As to quaternary structure, homotetramer.

The catalysed reaction is UTP + L-glutamine + ATP + H2O = CTP + L-glutamate + ADP + phosphate + 2 H(+). It carries out the reaction L-glutamine + H2O = L-glutamate + NH4(+). It catalyses the reaction UTP + NH4(+) + ATP = CTP + ADP + phosphate + 2 H(+). Its pathway is pyrimidine metabolism; CTP biosynthesis via de novo pathway; CTP from UDP: step 2/2. Its activity is regulated as follows. Allosterically activated by GTP, when glutamine is the substrate; GTP has no effect on the reaction when ammonia is the substrate. The allosteric effector GTP functions by stabilizing the protein conformation that binds the tetrahedral intermediate(s) formed during glutamine hydrolysis. Inhibited by the product CTP, via allosteric rather than competitive inhibition. Its function is as follows. Catalyzes the ATP-dependent amination of UTP to CTP with either L-glutamine or ammonia as the source of nitrogen. Regulates intracellular CTP levels through interactions with the four ribonucleotide triphosphates. The chain is CTP synthase from Cereibacter sphaeroides (strain ATCC 17023 / DSM 158 / JCM 6121 / CCUG 31486 / LMG 2827 / NBRC 12203 / NCIMB 8253 / ATH 2.4.1.) (Rhodobacter sphaeroides).